The chain runs to 484 residues: MNWEIVIGLETHTQLSTDSKIFSGSSTRFGAAPNTQANAVDLALPGSLPVMNRGAAERAILFGLAVGGKVAPRSVFARKNYFYPDLPKGYQISQYELPVVEGGTLSFFVGEEEKTVNLTRAHLEEDAGKSLHDEFSLASGAPASGIDLNRAGTPLLEIVTEPEMRSAAEAVAYARALHSLVVWLGICDGNMQEGSFRCDANVSVRPVGQKEFGTRTEIKNVNSFRFLERAILFEARRQIELIEDGGTVVQETRLYDADRDETRSMRSKEDAHDYRYFPDPDLPPLVIGQDWVDAVRAGMPELPAAQRARFEADYGLPAYDAAQLTVSRAMADYFEAVARALPAGQAKLAANWIMGEVAATLNREEKDIDAAPVSAAALAALINRIIDGTISNKIARDVFAAMWAGENGGDADAIIAARGLKQISDSGAIGAMIDEVLAANPAIVEEYRAGKQKAFNSLVGQIMKAAKGKANPQQVNELLKEKLG.

This sequence belongs to the GatB/GatE family. GatB subfamily. As to quaternary structure, heterotrimer of A, B and C subunits.

The enzyme catalyses L-glutamyl-tRNA(Gln) + L-glutamine + ATP + H2O = L-glutaminyl-tRNA(Gln) + L-glutamate + ADP + phosphate + H(+). It catalyses the reaction L-aspartyl-tRNA(Asn) + L-glutamine + ATP + H2O = L-asparaginyl-tRNA(Asn) + L-glutamate + ADP + phosphate + 2 H(+). Functionally, allows the formation of correctly charged Asn-tRNA(Asn) or Gln-tRNA(Gln) through the transamidation of misacylated Asp-tRNA(Asn) or Glu-tRNA(Gln) in organisms which lack either or both of asparaginyl-tRNA or glutaminyl-tRNA synthetases. The reaction takes place in the presence of glutamine and ATP through an activated phospho-Asp-tRNA(Asn) or phospho-Glu-tRNA(Gln). The protein is Aspartyl/glutamyl-tRNA(Asn/Gln) amidotransferase subunit B of Bordetella bronchiseptica (strain ATCC BAA-588 / NCTC 13252 / RB50) (Alcaligenes bronchisepticus).